Consider the following 90-residue polypeptide: Small ribosomal subunit protein uS17 (90 aa).

This sequence belongs to the universal ribosomal protein uS17 family. Part of the 30S ribosomal subunit.

In terms of biological role, one of the primary rRNA binding proteins, it binds specifically to the 5'-end of 16S ribosomal RNA. The polypeptide is Small ribosomal subunit protein uS17 (Paraburkholderia phymatum (strain DSM 17167 / CIP 108236 / LMG 21445 / STM815) (Burkholderia phymatum)).